A 568-amino-acid chain; its full sequence is ATP-dependent RNA helicase MRH4, mitochondrial (568 aa).

The transit peptide at Met1–Ala50 directs the protein to the mitochondrion. Over residues Ser36 to Arg49 the composition is skewed to polar residues. Residues Ser36–Leu64 form a disordered region. The short motif at Glu143 to Gln150 is the Q motif element. Residues Asn160–Leu348 form the Helicase ATP-binding domain. Residue Ala173–Thr180 coordinates ATP. The short motif at Asp296–Asp299 is the DEAD box element. Positions Ala379–Thr568 constitute a Helicase C-terminal domain.

It belongs to the DEAD box helicase family. MRH4 subfamily.

Its subcellular location is the mitochondrion. The enzyme catalyses ATP + H2O = ADP + phosphate + H(+). ATP-binding RNA helicase involved in mitochondrial RNA metabolism. Required for maintenance of mitochondrial DNA. This is ATP-dependent RNA helicase MRH4, mitochondrial (MRH4) from Candida glabrata (strain ATCC 2001 / BCRC 20586 / JCM 3761 / NBRC 0622 / NRRL Y-65 / CBS 138) (Yeast).